A 535-amino-acid chain; its full sequence is 4-hydroxy-3-methylbut-2-enyl diphosphate reductase, apicoplast (535 aa).

C231 is a binding site for [4Fe-4S] cluster. Residues H260 and H293 each contribute to the (2E)-4-hydroxy-3-methylbut-2-enyl diphosphate site. Residues H260 and H293 each contribute to the dimethylallyl diphosphate site. Isopentenyl diphosphate-binding residues include H260 and H293. C315 is a [4Fe-4S] cluster binding site. H343 contacts (2E)-4-hydroxy-3-methylbut-2-enyl diphosphate. H343 serves as a coordination point for dimethylallyl diphosphate. Position 343 (H343) interacts with isopentenyl diphosphate. The active-site Proton donor is E345. T383 contacts (2E)-4-hydroxy-3-methylbut-2-enyl diphosphate. [4Fe-4S] cluster is bound at residue C413. Residues S441, S442, N443, and S485 each coordinate (2E)-4-hydroxy-3-methylbut-2-enyl diphosphate. Dimethylallyl diphosphate is bound by residues S441, S442, N443, and S485. Isopentenyl diphosphate contacts are provided by S441, S442, N443, and S485.

Belongs to the IspH family. As to quaternary structure, interacts with Fd/ferredoxin. [4Fe-4S] cluster is required as a cofactor.

It localises to the plastid. The protein resides in the apicoplast. The catalysed reaction is dimethylallyl diphosphate + 2 oxidized [2Fe-2S]-[ferredoxin] + H2O = (2E)-4-hydroxy-3-methylbut-2-enyl diphosphate + 2 reduced [2Fe-2S]-[ferredoxin] + 2 H(+). The enzyme catalyses isopentenyl diphosphate + 2 oxidized [2Fe-2S]-[ferredoxin] + H2O = (2E)-4-hydroxy-3-methylbut-2-enyl diphosphate + 2 reduced [2Fe-2S]-[ferredoxin] + 2 H(+). Its pathway is isoprenoid biosynthesis; dimethylallyl diphosphate biosynthesis; dimethylallyl diphosphate from (2E)-4-hydroxy-3-methylbutenyl diphosphate: step 1/1. It functions in the pathway isoprenoid biosynthesis; isopentenyl diphosphate biosynthesis via DXP pathway; isopentenyl diphosphate from 1-deoxy-D-xylulose 5-phosphate: step 6/6. Its function is as follows. Catalyzes the conversion of 1-hydroxy-2-methyl-2-(E)-butenyl 4-diphosphate (HMBPP) into a mixture of isopentenyl diphosphate (IPP) and dimethylallyl diphosphate (DMAPP). Acts in the terminal step of the DOXP/MEP pathway for isoprenoid precursor biosynthesis. In Plasmodium falciparum (isolate 3D7), this protein is 4-hydroxy-3-methylbut-2-enyl diphosphate reductase, apicoplast.